Here is a 400-residue protein sequence, read N- to C-terminus: Casein kinase I homolog hhp2 (400 aa).

The Protein kinase domain occupies 12–278 (YRIGRKIGSG…YLRKLFRDLL (267 aa)). Residues 18–26 (IGSGSFGQI) and lysine 41 each bind ATP. Catalysis depends on aspartate 131, which acts as the Proton acceptor. The disordered stretch occupies residues 330-352 (PNYSSIPLPAERNPKTPQSFSTN).

Belongs to the protein kinase superfamily. CK1 Ser/Thr protein kinase family. Casein kinase I subfamily.

The protein resides in the nucleus. It carries out the reaction L-seryl-[protein] + ATP = O-phospho-L-seryl-[protein] + ADP + H(+). The enzyme catalyses L-threonyl-[protein] + ATP = O-phospho-L-threonyl-[protein] + ADP + H(+). In terms of biological role, involved in DNA repair. May regulate the activity of protein(s) involved in double strand break repair caused by gamma rays. This is Casein kinase I homolog hhp2 (hhp2) from Schizosaccharomyces pombe (strain 972 / ATCC 24843) (Fission yeast).